Reading from the N-terminus, the 49-residue chain is Large ribosomal subunit protein bL33 (49 aa).

It belongs to the bacterial ribosomal protein bL33 family.

This chain is Large ribosomal subunit protein bL33, found in Leuconostoc citreum (strain KM20).